Here is a 233-residue protein sequence, read N- to C-terminus: C-type lectin domain-containing protein 87 (233 aa).

The signal sequence occupies residues 1–19 (MRFCLLVAFILPGLFLVHA). Ser31 is a glycosylation site (O-linked (Xyl...) (chondroitin sulfate) serine). The N-linked (GlcNAc...) asparagine glycan is linked to Asn81. Residues 93-223 (FADSCYWIEK…CTYMLYSICE (131 aa)) enclose the C-type lectin domain. 2 disulfides stabilise this stretch: Cys114–Cys222 and Cys193–Cys214. N-linked (GlcNAc...) asparagine glycosylation is present at Asn225.

The protein is C-type lectin domain-containing protein 87 of Caenorhabditis elegans.